Reading from the N-terminus, the 101-residue chain is NAD(P)H-quinone oxidoreductase subunit 4L, chloroplastic (101 aa).

A run of 3 helical transmembrane segments spans residues I2–I22, M32–F52, and I61–V81.

It belongs to the complex I subunit 4L family. In terms of assembly, NDH is composed of at least 16 different subunits, 5 of which are encoded in the nucleus.

The protein resides in the plastid. Its subcellular location is the chloroplast thylakoid membrane. It carries out the reaction a plastoquinone + NADH + (n+1) H(+)(in) = a plastoquinol + NAD(+) + n H(+)(out). It catalyses the reaction a plastoquinone + NADPH + (n+1) H(+)(in) = a plastoquinol + NADP(+) + n H(+)(out). NDH shuttles electrons from NAD(P)H:plastoquinone, via FMN and iron-sulfur (Fe-S) centers, to quinones in the photosynthetic chain and possibly in a chloroplast respiratory chain. The immediate electron acceptor for the enzyme in this species is believed to be plastoquinone. Couples the redox reaction to proton translocation, and thus conserves the redox energy in a proton gradient. This Nicotiana sylvestris (Wood tobacco) protein is NAD(P)H-quinone oxidoreductase subunit 4L, chloroplastic.